Reading from the N-terminus, the 289-residue chain is Epoxyqueuosine reductase (289 aa).

Catalysis depends on D111, which acts as the Proton donor. Positions 156 to 185 (QGDRPHSQHCGTCTRCLEACPTQAIVEPFV) constitute a 4Fe-4S ferredoxin-type domain. The [4Fe-4S] cluster site is built by C165, C168, C171, C175, C191, C219, C222, and C226.

This sequence belongs to the QueG family. As to quaternary structure, monomer. It depends on cob(II)alamin as a cofactor. The cofactor is [4Fe-4S] cluster.

Its subcellular location is the cytoplasm. It catalyses the reaction epoxyqueuosine(34) in tRNA + AH2 = queuosine(34) in tRNA + A + H2O. The protein operates within tRNA modification; tRNA-queuosine biosynthesis. Its function is as follows. Catalyzes the conversion of epoxyqueuosine (oQ) to queuosine (Q), which is a hypermodified base found in the wobble positions of tRNA(Asp), tRNA(Asn), tRNA(His) and tRNA(Tyr). The protein is Epoxyqueuosine reductase of Synechocystis sp. (strain ATCC 27184 / PCC 6803 / Kazusa).